Here is a 264-residue protein sequence, read N- to C-terminus: Glutamate racemase (264 aa).

Substrate-binding positions include 10–11 (DS) and 42–43 (YG). Cys73 functions as the Proton donor/acceptor in the catalytic mechanism. 74-75 (NT) is a substrate binding site. Cys183 (proton donor/acceptor) is an active-site residue. 184-185 (TH) is a substrate binding site.

The protein belongs to the aspartate/glutamate racemases family.

It carries out the reaction L-glutamate = D-glutamate. It participates in cell wall biogenesis; peptidoglycan biosynthesis. Provides the (R)-glutamate required for cell wall biosynthesis. The protein is Glutamate racemase of Streptococcus suis (strain 98HAH33).